We begin with the raw amino-acid sequence, 854 residues long: DNA mismatch repair protein MutS (854 aa).

Residue 608 to 615 (GPNMAGKS) coordinates ATP.

The protein belongs to the DNA mismatch repair MutS family.

This protein is involved in the repair of mismatches in DNA. It is possible that it carries out the mismatch recognition step. This protein has a weak ATPase activity. In Leuconostoc mesenteroides subsp. mesenteroides (strain ATCC 8293 / DSM 20343 / BCRC 11652 / CCM 1803 / JCM 6124 / NCDO 523 / NBRC 100496 / NCIMB 8023 / NCTC 12954 / NRRL B-1118 / 37Y), this protein is DNA mismatch repair protein MutS.